Consider the following 223-residue polypeptide: MELYLDTASLEEIREIAAWGVLSGVTTNPTLVAKAFAAKGEALTEEAFAAHLRAICETVGGPVSAEVTALEAEAMVAEGRRLAAIHPNIVVKLPTTEEGLKACKRLSAEGIKVNMTLIFSANQALLAARAGASYVSPFLGRVDDISWDGGELLREIVEMIQVQDLPVKVIAASIRHPRHVTEAALLGADIATMPHAVFKQLLKHPLTDIGLKRFLEDWEKVKP.

Lysine 92 serves as the catalytic Schiff-base intermediate with substrate.

The protein belongs to the transaldolase family. Type 3B subfamily.

The protein localises to the cytoplasm. The catalysed reaction is D-sedoheptulose 7-phosphate + D-glyceraldehyde 3-phosphate = D-erythrose 4-phosphate + beta-D-fructose 6-phosphate. It functions in the pathway carbohydrate degradation; pentose phosphate pathway; D-glyceraldehyde 3-phosphate and beta-D-fructose 6-phosphate from D-ribose 5-phosphate and D-xylulose 5-phosphate (non-oxidative stage): step 2/3. Transaldolase is important for the balance of metabolites in the pentose-phosphate pathway. This is Probable transaldolase from Thermus thermophilus (strain ATCC 27634 / DSM 579 / HB8).